Reading from the N-terminus, the 173-residue chain is Ribosome maturation factor RimM (173 aa).

The region spanning 94-166 is the PRC barrel domain; it reads VQEEPYIDII…KIIVELPMGF (73 aa).

This sequence belongs to the RimM family. Binds ribosomal protein uS19.

It is found in the cytoplasm. An accessory protein needed during the final step in the assembly of 30S ribosomal subunit, possibly for assembly of the head region. Essential for efficient processing of 16S rRNA. May be needed both before and after RbfA during the maturation of 16S rRNA. It has affinity for free ribosomal 30S subunits but not for 70S ribosomes. The sequence is that of Ribosome maturation factor RimM from Amoebophilus asiaticus (strain 5a2).